The primary structure comprises 343 residues: UDP-3-O-acylglucosamine N-acyltransferase (343 aa).

His236 functions as the Proton acceptor in the catalytic mechanism.

The protein belongs to the transferase hexapeptide repeat family. LpxD subfamily. In terms of assembly, homotrimer.

The catalysed reaction is a UDP-3-O-[(3R)-3-hydroxyacyl]-alpha-D-glucosamine + a (3R)-hydroxyacyl-[ACP] = a UDP-2-N,3-O-bis[(3R)-3-hydroxyacyl]-alpha-D-glucosamine + holo-[ACP] + H(+). It functions in the pathway bacterial outer membrane biogenesis; LPS lipid A biosynthesis. Functionally, catalyzes the N-acylation of UDP-3-O-acylglucosamine using 3-hydroxyacyl-ACP as the acyl donor. Is involved in the biosynthesis of lipid A, a phosphorylated glycolipid that anchors the lipopolysaccharide to the outer membrane of the cell. The protein is UDP-3-O-acylglucosamine N-acyltransferase of Syntrophotalea carbinolica (strain DSM 2380 / NBRC 103641 / GraBd1) (Pelobacter carbinolicus).